The following is a 317-amino-acid chain: Serpentine receptor class delta-26 (317 aa).

Helical transmembrane passes span 5–25 (LLHTVLSVTGVTLNAFMMYLA), 38–58 (AIITIKTFTDILTSAMSFFVM), 83–103 (ACYVGHMFMLCFLECNLIWMI), 122–142 (SLVFVALCLSIPSFIHMAAWI), 176–196 (ITLILQLFITSVLVLIAYAWI), 227–247 (FQVFLPTFIFLGFFIFAAMFG), and 258–278 (LVSIAFMFSPICSPFSYILFV).

Belongs to the nematode receptor-like protein srd family.

It is found in the membrane. This Caenorhabditis elegans protein is Serpentine receptor class delta-26 (srd-26).